The chain runs to 466 residues: Reticulophagy regulator 3 (466 aa).

The Cytoplasmic segment spans residues 1–80 (MEEAEGVAAA…WCLGLNAAFW (80 aa)). S26 carries the phosphoserine modification. The helical transmembrane segment at 81 to 101 (FFALTSLRFVFLLAFSLMIIV) threads the bilayer. Residues 102–168 (CIDQWKNKIW…LLFKKQNPGK (67 aa)) lie on the Lumenal side of the membrane. Residues 169–187 (FCLLSCGVLTFLAMLGRYI) form a helical membrane-spanning segment. Residues 188–192 (PGLLL) lie on the Cytoplasmic side of the membrane. Residues 193-211 (SYLMLVIIMMWPLAVYHRL) traverse the membrane as a helical segment. Over 212–381 (WDRAYVRLKP…ASRNEAALPE (170 aa)) the chain is Lumenal. Positions 244 to 263 (RRRALHSERATDSHSDSEEE) are disordered. Residues 248-259 (LHSERATDSHSD) are compositionally biased toward basic and acidic residues. T254 carries the phosphothreonine modification. A phosphoserine mark is found at S258 and S260. T283 is modified (phosphothreonine). Phosphoserine is present on residues S285, S288, S293, and S303. The disordered stretch occupies residues 285-335 (SEHSDAEVSCTENGTFNLSRGQTPLTEGSEDLDGHSDPEESFARDLPDFPS). The span at 294–310 (CTENGTFNLSRGQTPLT) shows a compositional bias: polar residues. Residues T307 and T310 each carry the phosphothreonine modification. Phosphoserine occurs at positions 313, 320, and 360. A compositionally biased stretch (basic and acidic residues) spans 316 to 331 (LDGHSDPEESFARDLP). Residues 382–401 (LLLSSLPGGSNLTSNLASLV) traverse the membrane as a helical segment. The Cytoplasmic segment spans residues 402–466 (SQGMIQLALS…QLDPASSRSH (65 aa)). The disordered stretch occupies residues 412-444 (EASQTDPSGPPPRRATRGFLRAPSSDLDTDAEG). T440 bears the Phosphothreonine mark. The LIR motif motif lies at 445 to 450 (DDFELL).

The protein belongs to the RETREG family. Interacts with ATG8 family modifier proteins MAP1LC3A, MAP1LC3B, GABARAPL1 and GABARAPL2. Also interacts with ATG8 family modifier protein GABARAP. Interacts with CANX. Interacts with RTN4 isoform B. In terms of tissue distribution, widely expressed with highest levels in brain, lung, liver, muscle and spleen (protein level). Mainly expressed in the central nervous system and in parenchymatous organs including liver, lung and kidney.

Its subcellular location is the endoplasmic reticulum membrane. Its function is as follows. Endoplasmic reticulum (ER)-anchored autophagy regulator which exists in an inactive state under basal conditions but is activated following cellular stress. When activated, induces ER fragmentation and mediates ER delivery into lysosomes through sequestration into autophagosomes via interaction with ATG8 family proteins. Promotes ER membrane curvature and ER tubulation required for subsequent ER fragmentation and engulfment into autophagosomes. Required for collagen quality control in a LIR motif-dependent manner. Mediates NRF1-enhanced neurite outgrowth. This is Reticulophagy regulator 3 (Retreg3) from Mus musculus (Mouse).